The primary structure comprises 805 residues: Mitochondrial intermediate peptidase (805 aa).

The N-terminal 25 residues, 1–25 (MIQPLVKASRPRLWVCSDCLLRRTL), are a transit peptide targeting the mitochondrion. Residue histidine 578 participates in Zn(2+) binding. Glutamate 579 is an active-site residue. Positions 582 and 585 each coordinate Zn(2+).

This sequence belongs to the peptidase M3 family. Zn(2+) serves as cofactor.

It is found in the mitochondrion matrix. The catalysed reaction is Release of an N-terminal octapeptide as second stage of processing of some proteins imported into the mitochondrion.. In terms of biological role, cleaves proteins, imported into the mitochondrion, to their mature size. While most mitochondrial precursor proteins are processed to the mature form in one step by mitochondrial processing peptidase (MPP), the sequential cleavage by MIP of an octapeptide after initial processing by MPP is a required step for a subgroup of nuclear-encoded precursor proteins destined for the matrix or the inner membrane. This is Mitochondrial intermediate peptidase (oct-1) from Neurospora crassa (strain ATCC 24698 / 74-OR23-1A / CBS 708.71 / DSM 1257 / FGSC 987).